Consider the following 331-residue polypeptide: UPF0194 membrane protein Ent638_1286 (331 aa).

The first 16 residues, 1–16, serve as a signal peptide directing secretion; sequence MKKPVVVILAVVVLLA. Residues 107–208 adopt a coiled-coil conformation; it reads EEVAQAEAAV…LDLHDTTLIA (102 aa).

It belongs to the UPF0194 family.

The protein resides in the periplasm. The chain is UPF0194 membrane protein Ent638_1286 from Enterobacter sp. (strain 638).